The primary structure comprises 146 residues: Ribonuclease H (146 aa).

An RNase H type-1 domain is found at 1-141 (MEKIDIFTDG…ADALANRGVE (141 aa)). Residues D9, E47, D69, and D133 each coordinate Mg(2+).

It belongs to the RNase H family. Monomer. It depends on Mg(2+) as a cofactor.

The protein localises to the cytoplasm. The enzyme catalyses Endonucleolytic cleavage to 5'-phosphomonoester.. Functionally, endonuclease that specifically degrades the RNA of RNA-DNA hybrids. The polypeptide is Ribonuclease H (Herminiimonas arsenicoxydans).